The primary structure comprises 152 residues: Transcriptional repressor NrdR (152 aa).

The disordered stretch occupies residues 1 to 21; the sequence is MRCPFCGNGDTQVKDSRPTED. The segment at 3–34 is a zinc-finger region; it reads CPFCGNGDTQVKDSRPTEDSAAIRRRRFCPAC. Over residues 12 to 21 the composition is skewed to basic and acidic residues; the sequence is QVKDSRPTED. Residues 49 to 139 enclose the ATP-cone domain; that stretch reads LVIVKKDGQR…VYRNFREAKD (91 aa).

Belongs to the NrdR family. Zn(2+) serves as cofactor.

In terms of biological role, negatively regulates transcription of bacterial ribonucleotide reductase nrd genes and operons by binding to NrdR-boxes. This Rhodospirillum rubrum (strain ATCC 11170 / ATH 1.1.1 / DSM 467 / LMG 4362 / NCIMB 8255 / S1) protein is Transcriptional repressor NrdR.